We begin with the raw amino-acid sequence, 508 residues long: Steroid 17-alpha-hydroxylase/17,20 lyase (508 aa).

Cys-445 contacts heme.

The protein belongs to the cytochrome P450 family. The cofactor is heme.

It localises to the membrane. The catalysed reaction is a C21-steroid + reduced [NADPH--hemoprotein reductase] + O2 = a 17alpha-hydroxy-C21-steroid + oxidized [NADPH--hemoprotein reductase] + H2O + H(+). It catalyses the reaction 17alpha-hydroxyprogesterone + reduced [NADPH--hemoprotein reductase] + O2 = androst-4-ene-3,17-dione + acetate + oxidized [NADPH--hemoprotein reductase] + H2O + 2 H(+). The enzyme catalyses 17alpha-hydroxypregnenolone + reduced [NADPH--hemoprotein reductase] + O2 = 3beta-hydroxyandrost-5-en-17-one + acetate + oxidized [NADPH--hemoprotein reductase] + H2O + 2 H(+). Its pathway is lipid metabolism; steroid biosynthesis. Functionally, conversion of pregnenolone and progesterone to their 17-alpha-hydroxylated products and subsequently to dehydroepiandrosterone (DHEA) and androstenedione. Catalyzes both the 17-alpha-hydroxylation and the 17,20-lyase reaction. The polypeptide is Steroid 17-alpha-hydroxylase/17,20 lyase (CYP17A1) (Gallus gallus (Chicken)).